Reading from the N-terminus, the 189-residue chain is MVIKLIVGLRNPGSAYEQTRHNAGAWLVTALAQRHNSHFKIDKKMQAELTEIDINNHPCRLVLPLTFMNHSGQTTRIISQFYKIEPGEILIVHDELDLPVGRIKLKTGGGHGGHNGLRDITAQLGTGEFHRLRIGIGHPGHKDLVHQYVLSRPSMHDRQQIYDAIDRGIAIIPIVLSGDMARAMNQVNA.

Residue Tyr-16 coordinates tRNA. The active-site Proton acceptor is His-21. Positions 67, 69, and 115 each coordinate tRNA.

This sequence belongs to the PTH family. As to quaternary structure, monomer.

Its subcellular location is the cytoplasm. The enzyme catalyses an N-acyl-L-alpha-aminoacyl-tRNA + H2O = an N-acyl-L-amino acid + a tRNA + H(+). Functionally, hydrolyzes ribosome-free peptidyl-tRNAs (with 1 or more amino acids incorporated), which drop off the ribosome during protein synthesis, or as a result of ribosome stalling. Its function is as follows. Catalyzes the release of premature peptidyl moieties from peptidyl-tRNA molecules trapped in stalled 50S ribosomal subunits, and thus maintains levels of free tRNAs and 50S ribosomes. The protein is Peptidyl-tRNA hydrolase of Legionella pneumophila subsp. pneumophila (strain Philadelphia 1 / ATCC 33152 / DSM 7513).